The primary structure comprises 401 residues: tRNA-specific 2-thiouridylase MnmA (401 aa).

Residues 13-20 (GLSGGVDS) and Met39 each bind ATP. The segment at 99–101 (NPD) is interaction with target base in tRNA. The active-site Nucleophile is the Cys104. Cys104 and Cys202 are oxidised to a cystine. Residue Gly128 participates in ATP binding. Residues 152 to 154 (KDQ) form an interaction with tRNA region. Cys202 serves as the catalytic Cysteine persulfide intermediate. The tract at residues 329 to 330 (RY) is interaction with tRNA.

Belongs to the MnmA/TRMU family.

The protein resides in the cytoplasm. It catalyses the reaction S-sulfanyl-L-cysteinyl-[protein] + uridine(34) in tRNA + AH2 + ATP = 2-thiouridine(34) in tRNA + L-cysteinyl-[protein] + A + AMP + diphosphate + H(+). In terms of biological role, catalyzes the 2-thiolation of uridine at the wobble position (U34) of tRNA, leading to the formation of s(2)U34. The sequence is that of tRNA-specific 2-thiouridylase MnmA from Polaromonas sp. (strain JS666 / ATCC BAA-500).